We begin with the raw amino-acid sequence, 320 residues long: Aminoacyl tRNA synthase complex-interacting multifunctional protein 2 (320 aa).

Residues 31–51 (HSKTTSPATDAGHVQEPSEPS) form a disordered region. A Phosphoserine modification is found at Ser-36. The segment at 82 to 162 (TPDADLDVTN…HTHSSVKNVP (81 aa)) is interaction with PRKN. An interaction with TP53 region spans residues 162 to 225 (PENLLKCFGE…FLFSLFGQKH (64 aa)). The GST C-terminal domain maps to 220–317 (LFGQKHNAVH…NLAPFSTALQ (98 aa)).

Part of the multisynthetase complex (MSC), a multisubunit complex that groups tRNA ligases for Arg (RARS1), Asp (DARS1), Gln (QARS1), Ile (IARS1), Leu (LARS1), Lys (KARS1), Met (MARS1) the bifunctional ligase for Glu and Pro (EPRS1) and the auxiliary subunits AIMP1/p43, AIMP2/p38 and EEF1E1/p18. Interacts (via N-terminus) with KARS1. Interacts with EPRS1. Forms a linear complex that contains MARS1, EEF1E1, EPRS1 and AIMP2 that is at the core of the multisubunit complex. Binds FUBP1 (via C-terminus). Interacts in both its unphosphorylated and phosphorylated forms with p53/TP53 (via N-terminus) in the nucleus following UV irradiation. Interacts (via N-terminus) with PRKN/parkin (via first RING-type domain). Interacts with TARS3. In terms of processing, phosphorylated on serine residues in response to UV irradiation. Post-translationally, ubiquitinated by PRKN, leading to its degradation by the proteasome.

It localises to the cytoplasm. Its subcellular location is the cytosol. The protein resides in the nucleus. Functionally, required for assembly and stability of the aminoacyl-tRNA synthase complex. Mediates ubiquitination and degradation of FUBP1, a transcriptional activator of MYC, leading to MYC down-regulation which is required for aveolar type II cell differentiation. Blocks MDM2-mediated ubiquitination and degradation of p53/TP53. Functions as a proapoptotic factor. This chain is Aminoacyl tRNA synthase complex-interacting multifunctional protein 2 (Aimp2), found in Rattus norvegicus (Rat).